The sequence spans 333 residues: Probable cytosolic iron-sulfur protein assembly protein 1 (333 aa).

WD repeat units lie at residues leucine 12 to glutamate 50, alanine 55 to glutamate 94, glycine 107 to glutamate 146, glutamate 153 to cysteine 192, glycine 197 to glutamate 238, alanine 250 to glutamate 288, and tyrosine 298 to asparagine 333.

Belongs to the WD repeat CIA1 family. As to quaternary structure, interacts with NAR1.

Its subcellular location is the cytoplasm. It localises to the nucleus. Its function is as follows. Essential component of the cytosolic iron-sulfur (Fe/S) protein assembly machinery. Required for the maturation of extramitochondrial Fe/S proteins. This Kluyveromyces lactis (strain ATCC 8585 / CBS 2359 / DSM 70799 / NBRC 1267 / NRRL Y-1140 / WM37) (Yeast) protein is Probable cytosolic iron-sulfur protein assembly protein 1.